Here is a 376-residue protein sequence, read N- to C-terminus: Chaperone protein DnaJ (376 aa).

The region spanning aspartate 5–glycine 70 is the J domain. The CR-type zinc-finger motif lies at glycine 136–threonine 214. Residues cysteine 149, cysteine 152, cysteine 166, cysteine 169, cysteine 188, cysteine 191, cysteine 202, and cysteine 205 each coordinate Zn(2+). CXXCXGXG motif repeat units follow at residues cysteine 149–glycine 156, cysteine 166–glycine 173, cysteine 188–glycine 195, and cysteine 202–glycine 209.

Belongs to the DnaJ family. In terms of assembly, homodimer. The cofactor is Zn(2+).

It localises to the cytoplasm. Participates actively in the response to hyperosmotic and heat shock by preventing the aggregation of stress-denatured proteins and by disaggregating proteins, also in an autonomous, DnaK-independent fashion. Unfolded proteins bind initially to DnaJ; upon interaction with the DnaJ-bound protein, DnaK hydrolyzes its bound ATP, resulting in the formation of a stable complex. GrpE releases ADP from DnaK; ATP binding to DnaK triggers the release of the substrate protein, thus completing the reaction cycle. Several rounds of ATP-dependent interactions between DnaJ, DnaK and GrpE are required for fully efficient folding. Also involved, together with DnaK and GrpE, in the DNA replication of plasmids through activation of initiation proteins. The protein is Chaperone protein DnaJ of Burkholderia pseudomallei (strain 1710b).